A 642-amino-acid chain; its full sequence is Ribosome biogenesis protein BOP1 homolog (642 aa).

The disordered stretch occupies residues 1–28 (MIHKRMNSTELERTSKKIDDYDSSDEED). Residues 10–20 (ELERTSKKIDD) show a composition bias toward basic and acidic residues. WD repeat units lie at residues 311–351 (GHSG…CLKT), 353–393 (SLDG…DRHR), 472–510 (RLKG…LKKK), 513–552 (TGSQ…KPWK), 556–595 (HHTA…DSLK), and 612–642 (KNGL…ALFT).

It belongs to the WD repeat BOP1/ERB1 family.

The protein localises to the nucleus. It is found in the nucleolus. It localises to the nucleoplasm. In terms of biological role, required for maturation of ribosomal RNAs and formation of the large ribosomal subunit. This is Ribosome biogenesis protein BOP1 homolog from Brugia malayi (Filarial nematode worm).